Here is a 254-residue protein sequence, read N- to C-terminus: Triosephosphate isomerase (254 aa).

12 to 14 is a substrate binding site; that stretch reads NWK. His99 serves as the catalytic Electrophile. The active-site Proton acceptor is Glu169. Substrate-binding positions include Gly175, Ser214, and 235–236; that span reads GG.

The protein belongs to the triosephosphate isomerase family. As to quaternary structure, homodimer.

It localises to the cytoplasm. It catalyses the reaction D-glyceraldehyde 3-phosphate = dihydroxyacetone phosphate. Its pathway is carbohydrate biosynthesis; gluconeogenesis. It functions in the pathway carbohydrate degradation; glycolysis; D-glyceraldehyde 3-phosphate from glycerone phosphate: step 1/1. Its function is as follows. Involved in the gluconeogenesis. Catalyzes stereospecifically the conversion of dihydroxyacetone phosphate (DHAP) to D-glyceraldehyde-3-phosphate (G3P). This is Triosephosphate isomerase from Bartonella bacilliformis (strain ATCC 35685 / KC583 / Herrer 020/F12,63).